A 456-amino-acid chain; its full sequence is MTASLWQQCLNRLQDELPSAEFSMWIRPLQAELSDNTLTLYAPNRFVLDWVRDKYLIRVNGIINELCGVDGPTLRFDIGNRPHPVAIARAPARGAAPVNNLQKSWESKADAKPEPNHKSNTNVNYTFENFVEGKSNQLARAAARQVADNPGGAYNPLFLYGGTGLGKTHLLHAVGNAIKERKKDAKVIYMHSERFVQDMVKALQNNAIEEFKRYYRSVDALLIDDIQFFANKERSQEEFFHTFNALLEGNQQIILTSDRYPKEINGVEDRLKSRFGWGLTVAIEPPELETRVAILMRKADENQIHLPDEVAFFIAKRLRSNVRELEGALNRVIANANFTGRAINIDFVREALRDLLALQEKLVTIDNIQKTVAEYYKIKLADLLSKRRSRSVARPRQLAMALAKELTNHSLPEIGDAFGGREHTTVLHACRKIEQLKEESHDIKEDYSNLIRTLSS.

The segment at Met-1–His-83 is domain I, interacts with DnaA modulators. Residues His-83–Ser-119 are domain II. Residues Asn-120–Ala-336 are domain III, AAA+ region. 4 residues coordinate ATP: Gly-164, Gly-166, Lys-167, and Thr-168. The interval Asn-337–Ser-456 is domain IV, binds dsDNA.

Belongs to the DnaA family. In terms of assembly, oligomerizes as a right-handed, spiral filament on DNA at oriC.

It localises to the cytoplasm. In terms of biological role, plays an essential role in the initiation and regulation of chromosomal replication. ATP-DnaA binds to the origin of replication (oriC) to initiate formation of the DNA replication initiation complex once per cell cycle. Binds the DnaA box (a 9 base pair repeat at the origin) and separates the double-stranded (ds)DNA. Forms a right-handed helical filament on oriC DNA; dsDNA binds to the exterior of the filament while single-stranded (ss)DNA is stabiized in the filament's interior. The ATP-DnaA-oriC complex binds and stabilizes one strand of the AT-rich DNA unwinding element (DUE), permitting loading of DNA polymerase. After initiation quickly degrades to an ADP-DnaA complex that is not apt for DNA replication. Binds acidic phospholipids. The polypeptide is Chromosomal replication initiator protein DnaA (Aeromonas salmonicida (strain A449)).